A 284-amino-acid chain; its full sequence is 4-diphosphocytidyl-2-C-methyl-D-erythritol kinase (284 aa).

Lysine 14 is a catalytic residue. Residue 98–108 (PMGGGLGGGSS) participates in ATP binding. The active site involves aspartate 140.

It belongs to the GHMP kinase family. IspE subfamily.

It catalyses the reaction 4-CDP-2-C-methyl-D-erythritol + ATP = 4-CDP-2-C-methyl-D-erythritol 2-phosphate + ADP + H(+). The protein operates within isoprenoid biosynthesis; isopentenyl diphosphate biosynthesis via DXP pathway; isopentenyl diphosphate from 1-deoxy-D-xylulose 5-phosphate: step 3/6. Catalyzes the phosphorylation of the position 2 hydroxy group of 4-diphosphocytidyl-2C-methyl-D-erythritol. In Shewanella piezotolerans (strain WP3 / JCM 13877), this protein is 4-diphosphocytidyl-2-C-methyl-D-erythritol kinase.